The primary structure comprises 188 residues: MENIMPFALLGLCVGLAAGTEGAVVKDFDISKFLGFWYEIAFASKMGTPGLAHKEEKMGAMVVELKENLLALTTTYYSEDHCVLEKVTATEGDGPAKFQVTRLSGKKEVVVEATDYLTYAIIDITSLVAGAVHRTMKLYSRSLDDNGEALYNFRKITSDHGFSETDLYILKHDLTCVKVLQSAAESRP.

The first 19 residues, 1-19 (MENIMPFALLGLCVGLAAG), serve as a signal peptide directing secretion. An intrachain disulfide couples Cys-82 to Cys-176.

This sequence belongs to the calycin superfamily. Lipocalin family. Post-translationally, there are two similar, immunologically cross-reacting forms of this protein, designated B and C, which probably result from different processing of the amino end. The N-terminus of form C is probably blocked. Synthesized exclusively in the proximal part (caput epididymidis) of the epididymis. It makes up a substantial part of the total protein in the epididymal luminal fluid and binds to the sperm membrane.

Its subcellular location is the secreted. Associates with spermatozoa in the epididymal fluid but does not bind tightly to them. Binds both all-trans and 9-cis retinoic acid. May act as a retinoid carrier protein which is required for epididymal function and/or sperm maturation. The protein is Epididymal-specific lipocalin-5 (Lcn5) of Rattus norvegicus (Rat).